Reading from the N-terminus, the 863-residue chain is DNA mismatch repair protein MutS (863 aa).

607 to 614 (GPNMAGKS) is a binding site for ATP.

The protein belongs to the DNA mismatch repair MutS family.

This protein is involved in the repair of mismatches in DNA. It is possible that it carries out the mismatch recognition step. This protein has a weak ATPase activity. This Caldicellulosiruptor saccharolyticus (strain ATCC 43494 / DSM 8903 / Tp8T 6331) protein is DNA mismatch repair protein MutS.